The primary structure comprises 435 residues: MRNTAMKAQWTDFITLLKREVVPALGCTEPMSVALAAANCRKLLGQTPTRVSVWVSGNLFKNGMGVGVPGTGMIGLPVAAAVGFTGGNPDAGLEVLNTLTPAQVEEAKALLPIIKVDVKDVPDVLYAEVLAEVEGHSARVVICTDHTRIVLMELDGEVLMEQNSAPGVQIQPAKSDKPAMTLREIVAFALEVPLAEIDFIGAAATMNQALADEGLQGYGLRIGKILTEQVERKLLSDDLMTLAMRLSSAASDARMDGAMLPAMSNSGSGNQGIAATMPVVAAARFLKASDEQLTRALVMSHLVAIYIKTHQNKLSALCAASTAAMGSGAAITWLLGGQFEQISHCINNMIGDVSGIICDGAGSACSMKVSTSTSAAVKSSLMAINNLHVPQSEGIVSDDVDETIANLGRLSKLGMLDTDIEIINIMRAKQQGKAQ.

The protein belongs to the UPF0597 family.

The protein is UPF0597 protein ASA_0240 of Aeromonas salmonicida (strain A449).